The sequence spans 110 residues: Nucleoid-associated protein ESA_02800 (110 aa).

The tract at residues 89-110 is disordered; it reads QKEKMASVSSGMQLPPGFKMPF.

It belongs to the YbaB/EbfC family. In terms of assembly, homodimer.

Its subcellular location is the cytoplasm. The protein localises to the nucleoid. In terms of biological role, binds to DNA and alters its conformation. May be involved in regulation of gene expression, nucleoid organization and DNA protection. This Cronobacter sakazakii (strain ATCC BAA-894) (Enterobacter sakazakii) protein is Nucleoid-associated protein ESA_02800.